The primary structure comprises 135 residues: Protein Wnt-7a (135 aa).

2 cysteine pairs are disulfide-bonded: C3–C17 and C5–C12. The O-palmitoleoyl serine; by PORCN moiety is linked to residue S9. Residues 41-69 (VEPVRASRNKRPTFLKIKKPLSYRKPMDT) form a disordered linker region. Intrachain disulfides connect C81–C112, C97–C107, C111–C134, and C130–C131. N98 carries N-linked (GlcNAc...) asparagine glycosylation.

The protein belongs to the Wnt family. Palmitoleoylation is required for efficient binding to frizzled receptors. Depalmitoleoylation leads to Wnt signaling pathway inhibition. In terms of tissue distribution, in embryo, in brain and ventral neural tube; in adults, in brain.

It is found in the secreted. Its subcellular location is the extracellular space. The protein resides in the extracellular matrix. Ligand for members of the frizzled family of seven transmembrane receptors that functions in the canonical Wnt/beta-catenin signaling pathway. Plays an important role in embryonic development, including dorsal versus ventral patterning during limb development, skeleton development and urogenital tract development. Required for central nervous system (CNS) angiogenesis and blood-brain barrier regulation. In Xenopus laevis (African clawed frog), this protein is Protein Wnt-7a (wnt7a).